A 78-amino-acid polypeptide reads, in one-letter code: MKLKISFLILVLFSVFFAIEGIIKWFPASVNGKGHSSCTNGLEMTEEDFCKMLCGIDGKLRESKCVDHWCYCSQILFP.

Residues 1–21 (MKLKISFLILVLFSVFFAIEG) form the signal peptide. Residues 22 to 32 (IIKWFPASVNG) constitute a propeptide that is removed on maturation.

Contains 3 disulfide bonds. In terms of tissue distribution, expressed by the venom gland.

The protein localises to the secreted. Its function is as follows. Reversibly inhibits potassium channels. This chain is Toxin BmTxKS4, found in Olivierus martensii (Manchurian scorpion).